A 191-amino-acid chain; its full sequence is Adenylate kinase (191 aa).

ATP is bound at residue 12-17 (GSGKTT). Positions 34 to 63 (STGDLLRAESAKKTERGLLIEKFTSQGELV) are NMP. AMP contacts are provided by residues T35, R40, 61 to 63 (ELV), 88 to 91 (GYPR), and Q95. The interval 130 to 136 (GRSRGAD) is LID. Position 131 (R131) interacts with ATP. AMP contacts are provided by R133 and R145. R173 provides a ligand contact to ATP.

It belongs to the adenylate kinase family. Monomer.

It localises to the cytoplasm. The catalysed reaction is AMP + ATP = 2 ADP. It participates in purine metabolism; AMP biosynthesis via salvage pathway; AMP from ADP: step 1/1. Catalyzes the reversible transfer of the terminal phosphate group between ATP and AMP. Plays an important role in cellular energy homeostasis and in adenine nucleotide metabolism. This Helicobacter pylori (strain Shi470) protein is Adenylate kinase.